We begin with the raw amino-acid sequence, 1834 residues long: Sodium channel protein type 4 subunit alpha (1834 aa).

The Cytoplasmic segment spans residues 1 to 131; the sequence is MASSSLPNLV…RSAIKVLIHS (131 aa). One copy of the I repeat lies at 113-448; sequence MLSPFSIIRR…VVTMAYAEQN (336 aa). A helical transmembrane segment spans residues 132–150; sequence LFSMFIMITILPNCVVMTM. The Extracellular segment spans residues 151-157; sequence SDPPPWP. A helical transmembrane segment spans residues 158-178; that stretch reads IHVENTFTGINTFESLIKMLA. Over 179 to 192 the chain is Cytoplasmic; the sequence is RGFCIDDFTFLRDP. Residues 193–210 traverse the membrane as a helical segment; the sequence is WNWLDFSVIMMAYLTEFV. The Extracellular segment spans residues 211–216; it reads DLGNIS. The N-linked (GlcNAc...) asparagine glycan is linked to N214. A helical transmembrane segment spans residues 217-233; it reads ALRTFRVLRALKTITVI. At 234–252 the chain is on the cytoplasmic side; sequence PGLKTIVGALIQSVKKLSD. The chain crosses the membrane as a helical span at residues 253 to 272; the sequence is VMILTVFCLSVFALVGLQLF. The Extracellular portion of the chain corresponds to 273–385; it reads MGNLRQKCVR…PNYGYTSHDT (113 aa). A disulfide bond links C280 and C354. Residues N288, N291, N297, N303, N309, N327, and N356 are each glycosylated (N-linked (GlcNAc...) asparagine). A disulfide bridge links C363 with C369. Positions 386 to 410 form an intramembrane region, pore-forming; that stretch reads FSWAFLALFRLMIQDYWENLFQLTL. The Extracellular portion of the chain corresponds to 411-417; that stretch reads RAAGKTY. Residues 418–438 traverse the membrane as a helical segment; it reads MIFFVVIIFLGSFYLINLILA. Over 439–572 the chain is Cytoplasmic; it reads VVTMAYAEQN…NIIHLIVMDP (134 aa). Residues 486-525 form a disordered region; the sequence is EGGEAGGDPAHSKDCNGSLDTSPGEKGPPRQSCSADSGVS. An II repeat occupies 554-826; sequence CCTPWVKFKN…QISSWPIKLG (273 aa). The helical transmembrane segment at 573-591 threads the bilayer; that stretch reads FVDLGITICIVLNTLFMAM. At 592–602 the chain is on the extracellular side; that stretch reads EHYPMTEHFDK. The helical transmembrane segment at 603-622 threads the bilayer; that stretch reads VLTVGNLVFTGIFTAEMVLK. The Cytoplasmic portion of the chain corresponds to 623 to 636; that stretch reads LIALDPYEYFQQGW. A helical membrane pass occupies residues 637-656; that stretch reads NVFDSIIVTLSWVELGLVNV. At 657–658 the chain is on the extracellular side; it reads KG. Residues 659-676 form a helical membrane-spanning segment; the sequence is LSVLRSFRLVRSLKLAKS. Residues 677–692 lie on the Cytoplasmic side of the membrane; it reads WPTLNMFIRIIGNSGG. The chain crosses the membrane as a helical span at residues 693–711; the sequence is GLGNLTLVLAIIVVNFSVV. Over 712–740 the chain is Extracellular; sequence GMQLFGKNYKECVCKNASDCALPRWKMCD. A disulfide bridge links C725 with C731. Positions 741–761 form an intramembrane region, pore-forming; the sequence is FFHSFLIVLRILCGEWIEPMW. Residues 762 to 772 are Extracellular-facing; sequence GFMEVAGQAMF. Residues 773–791 form a helical membrane-spanning segment; sequence LTVLLMVMVNGNLVDLDLF. At 792 to 1029 the chain is on the cytoplasmic side; that stretch reads LALLLNPLNS…ACFKIVEHHW (238 aa). Disordered stretches follow at residues 853 to 886 and 929 to 989; these read GDPG…KDLK and SDLE…QPEE. Residues 860 to 869 are compositionally biased toward acidic residues; sequence EAGEAEESAP. Positions 870–886 are enriched in basic and acidic residues; the sequence is EDEKKEPPPEDDDKDLK. Acidic residues-rich tracts occupy residues 929-945 and 972-989; these read SDLE…FSEP and EDPE…QPEE. Residues 1010 to 1323 form an III repeat; the sequence is RGKMWWTLRR…KKYYNAMKKL (314 aa). A helical membrane pass occupies residues 1030-1047; sequence FKTFNSSLILLNSGTLAF. Over 1048–1060 the chain is Extracellular; the sequence is EDIYIEQRRVIRT. A helical transmembrane segment spans residues 1061–1079; sequence ILEYADKVFTYIFIMEMLL. The Cytoplasmic portion of the chain corresponds to 1080 to 1093; the sequence is KWVAYGFKVYFTNA. Residues 1094-1112 form a helical membrane-spanning segment; that stretch reads WCWLDFLIVDVSIISLVAN. Over 1113 to 1120 the chain is Extracellular; sequence WLGYSELG. Residues 1121 to 1139 traverse the membrane as a helical segment; it reads PIKSLRTLRALRPLRALSR. At 1140–1156 the chain is on the cytoplasmic side; that stretch reads FEGMRVVVNALLGAIPS. The chain crosses the membrane as a helical span at residues 1157–1176; sequence IMNVLLVCLIFWVIFSIMGV. Over 1177 to 1227 the chain is Extracellular; sequence NLFAAKIYYFINTTTSERFDISGVNNKSECESLIHTGQVRWLNVKVNYDNV. N1188 and N1202 each carry an N-linked (GlcNAc...) asparagine glycan. Residues 1228 to 1249 constitute an intramembrane region (pore-forming); sequence GLGYLSLLQVATFKGWMDIMYS. Residues 1250–1266 are Extracellular-facing; it reads AVDSREQEEQPQYEVNI. The chain crosses the membrane as a helical span at residues 1267–1288; sequence YMYLYFVIFIIFGSFFTINSLI. Residues 1289–1351 lie on the Cytoplasmic side of the membrane; that stretch reads RLIIVNFNQQ…MVYDFVTKQV (63 aa). The tract at residues 1307–1309 is important for rapid channel inactivation; that stretch reads IFM. An IV repeat occupies 1332–1630; the sequence is IPRPQNKIQG…WEKFGPDATQ (299 aa). Residues 1352 to 1369 traverse the membrane as a helical segment; the sequence is FDITIMILICLNMVTMMV. The Extracellular segment spans residues 1370 to 1380; it reads ETDDQSQLKVD. Residues 1381–1399 form a helical membrane-spanning segment; it reads ILYNINMVFIIVFTGECVL. Residues 1400 to 1411 are Cytoplasmic-facing; the sequence is KMFALRQNYFTV. The helical transmembrane segment at 1412–1429 threads the bilayer; the sequence is GWNIFDFVVVILSIVGLA. Residues 1430 to 1442 lie on the Extracellular side of the membrane; that stretch reads LSDLIQKYFVSPT. The helical transmembrane segment at 1443 to 1459 threads the bilayer; the sequence is LFRVIRLARIGRVLRLI. The Cytoplasmic portion of the chain corresponds to 1460–1478; that stretch reads RGAKGIRTLLFALMMSLPA. A helical membrane pass occupies residues 1479-1496; the sequence is LFNIGLLLILVMFIYSIF. The Extracellular segment spans residues 1497-1518; that stretch reads GMSNFAYVKKESGIDDMFNFET. An intramembrane region (pore-forming) is located at residues 1519–1541; it reads FGNSIICLFEITTSAGWDGLLNP. At 1542–1571 the chain is on the extracellular side; sequence ILNSGPPDCDPTLENPGTSVRGDCGNPSIG. An intrachain disulfide couples C1550 to C1565. A helical transmembrane segment spans residues 1572 to 1594; sequence ICFFCSYIIISFLIVVNMYIAII. Over 1595-1834 the chain is Cytoplasmic; the sequence is LENFNVATEE…LHPGVKESLV (240 aa). Residues 1724-1753 form the IQ domain; the sequence is EEVCAIKIQRAYRRHLLQRSVKQASYMYRH. Residues 1776 to 1834 are disordered; sequence MYGRENGNSGVQNKGEERGSTGDAGPTMGLTPINPSDSALPPSPPPGLPLHPGVKESLV.

The protein belongs to the sodium channel (TC 1.A.1.10) family. Nav1.4/SCN4A subfamily. As to quaternary structure, the Nav1.4 voltage-gated sodium channel consists of an ion-conducting alpha subunit SCN4A which is functional on its own and a regulatory beta subunit SCN1B. SCN1B strongly enhances the presence of SCN4A at the cell surface. SCN1B is also required for rapid channel inactivation and recovery after inactivation. It prevents the decrease of channel activity in response to repetitive, high-frequency depolarizations. Interacts with the syntrophins SNTA1, SNTB1 and SNTB2 (via PDZ domain); probably links SCN4A to the actin cytoskeleton and the extracellular matrix via the dystrophin-associated protein complex and regulates its localization in muscle cells. Interacts with TMEM233; probable regulator of the channel.

It is found in the cell membrane. It carries out the reaction Na(+)(in) = Na(+)(out). In terms of biological role, pore-forming subunit of Nav1.4, a voltage-gated sodium (Nav) channel that directly mediates the depolarizing phase of action potentials in excitable membranes. Navs, also called VGSCs (voltage-gated sodium channels) or VDSCs (voltage-dependent sodium channels), operate by switching between closed and open conformations depending on the voltage difference across the membrane. In the open conformation they allow Na(+) ions to selectively pass through the pore, along their electrochemical gradient. The influx of Na+ ions provokes membrane depolarization, initiating the propagation of electrical signals throughout cells and tissues. Highly expressed in skeletal muscles, Nav1.4 generates the action potential crucial for muscle contraction. This chain is Sodium channel protein type 4 subunit alpha, found in Equus caballus (Horse).